The chain runs to 206 residues: Probable GTP-binding protein EngB (206 aa).

The 173-residue stretch at 23–195 (DLLEIAFVGR…WARIEAIMAE (173 aa)) folds into the EngB-type G domain. GTP is bound by residues 31–38 (GRSNVGKS), 58–62 (GRTQL), 76–79 (DLPG), 143–146 (TKCD), and 174–176 (FSA). The Mg(2+) site is built by Ser38 and Thr60.

This sequence belongs to the TRAFAC class TrmE-Era-EngA-EngB-Septin-like GTPase superfamily. EngB GTPase family. It depends on Mg(2+) as a cofactor.

In terms of biological role, necessary for normal cell division and for the maintenance of normal septation. This chain is Probable GTP-binding protein EngB, found in Geobacter sulfurreducens (strain ATCC 51573 / DSM 12127 / PCA).